The sequence spans 389 residues: SH2 domain-containing protein 2A (389 aa).

Positions 41–63 (AASPQAPEAASNTGNAERAEEVP) are disordered. The SH2 domain occupies 95-186 (WFHGFITRRE…PYGETLTEPL (92 aa)). The segment at 190 to 295 (TPEPAGLSLR…PIAFYAMGRG (106 aa)) is disordered. The span at 203–216 (SNFGSKSQDPNPQY) shows a compositional bias: polar residues. Phosphoserine is present on serine 217. Short sequence motifs (SH3-binding) lie at residues 244–250 (RPKPPIP) and 272–278 (RPKPSNP). The span at 245–256 (PKPPIPAKPQLP) shows a compositional bias: pro residues. Position 296 is a phosphoserine (serine 296). A disordered region spans residues 324 to 389 (KSWSRPVPGG…QAWLPLGPPQ (66 aa)). The segment covering 337–348 (GGSQLHSENSVI) has biased composition (polar residues). Pro residues predominate over residues 352 to 361 (PPLPHQPPPA).

In terms of assembly, interacts with KDR. Interacts with TXK and ITK. In terms of processing, phosphorylated on tyrosine residues. As to expression, expression limited to tissues of the immune system and, in particular, activated T-cells. Expressed in peripheral blood leukocytes, thymus and spleen. Much lower expression or undetectable, in brain, placenta, skeletal muscle, prostate, testis, ovary, small intestine, and colon. Expressed at low levels in unstimulated T-cells, but not expressed in normal resting or activated B-cells. According to PubMed:10692392, expression is not restricted to activated T-cells, but strongly expressed in blood cell lineages, the endothelium and other cell and tissue types, such as heart, lung, and liver.

The protein localises to the cytoplasm. Functionally, could be a T-cell-specific adapter protein involved in the control of T-cell activation. May play a role in the CD4-p56-LCK-dependent signal transduction pathway. Could also play an important role in normal and pathological angiogenesis. Could be an adapter protein that facilitates and regulates interaction of KDR with effector proteins important to endothelial cell survival and proliferation. The chain is SH2 domain-containing protein 2A (SH2D2A) from Homo sapiens (Human).